The primary structure comprises 80 residues: Small ribosomal subunit protein bS21 (80 aa).

The protein belongs to the bacterial ribosomal protein bS21 family.

The chain is Small ribosomal subunit protein bS21 from Rhodospirillum rubrum (strain ATCC 11170 / ATH 1.1.1 / DSM 467 / LMG 4362 / NCIMB 8255 / S1).